The primary structure comprises 122 residues: Large ribosomal subunit protein uL14 (122 aa).

As to quaternary structure, forms a cluster with proteins L3 and L19. In the 70S ribosome, L14 and L19 interact and together make contacts with the 16S rRNA in bridges B5 and B8. Part of the 50S ribosomal subunit.

Its function is as follows. Binds to 23S rRNA. Forms part of two intersubunit bridges in the 70S ribosome. The polypeptide is Large ribosomal subunit protein uL14 (Rhodopseudomonas palustris (strain ATCC BAA-98 / CGA009)).